The chain runs to 253 residues: Major prion protein (253 aa).

The signal sequence occupies residues 1–22 (MANLGCWMLVLFVATWSDLGLC). The interaction with ADGRG6 stretch occupies residues 23–38 (KKRPKPGGWNTGGSRY). The tract at residues 23-230 (KKRPKPGGWN…ESQAYYQRGS (208 aa)) is interaction with GRB2, ERI3 and SYN1. Residues 26–108 (PKPGGWNTGG…WNKPSKPKTN (83 aa)) are disordered. 5 repeat units span residues 51 to 59 (PQGGGGWGQ), 60 to 67 (PHGGGWGQ), 68 to 75 (PHGGGWGQ), 76 to 83 (PHGGGWGQ), and 84 to 91 (PHGGGWGQ). Residues 51-91 (PQGGGGWGQPHGGGWGQPHGGGWGQPHGGGWGQPHGGGWGQ) form a 5 X 8 AA tandem repeats of P-H-G-G-G-W-G-Q region. The segment covering 52-95 (QGGGGWGQPHGGGWGQPHGGGWGQPHGGGWGQPHGGGWGQGGGT) has biased composition (gly residues). Residues His61, Gly62, Gly63, His69, Gly70, Gly71, His77, Gly78, Gly79, His85, Gly86, and Gly87 each contribute to the Cu(2+) site. Cys179 and Cys214 are disulfide-bonded. Residues Asn181 and Asn197 are each glycosylated (N-linked (GlcNAc...) asparagine). The GPI-anchor amidated serine moiety is linked to residue Ser230. A propeptide spans 231–253 (SMVLFSSPPVILLISFLIFLIVG) (removed in mature form).

It belongs to the prion family. In terms of assembly, monomer and homodimer. Has a tendency to aggregate into amyloid fibrils containing a cross-beta spine, formed by a steric zipper of superposed beta-strands. Soluble oligomers may represent an intermediate stage on the path to fibril formation. Copper binding may promote oligomerization. Interacts with GRB2, APP, ERI3/PRNPIP and SYN1. Mislocalized cytosolically exposed PrP interacts with MGRN1; this interaction alters MGRN1 subcellular location and causes lysosomal enlargement. Interacts with KIAA1191. Interacts with ADGRG6. Post-translationally, the glycosylation pattern (the amount of mono-, di- and non-glycosylated forms or glycoforms) seems to differ in normal and CJD prion.

It localises to the cell membrane. The protein localises to the golgi apparatus. Its primary physiological function is unclear. May play a role in neuronal development and synaptic plasticity. May be required for neuronal myelin sheath maintenance. May promote myelin homeostasis through acting as an agonist for ADGRG6 receptor. May play a role in iron uptake and iron homeostasis. Soluble oligomers are toxic to cultured neuroblastoma cells and induce apoptosis (in vitro). Association with GPC1 (via its heparan sulfate chains) targets PRNP to lipid rafts. Also provides Cu(2+) or Zn(2+) for the ascorbate-mediated GPC1 deaminase degradation of its heparan sulfate side chains. This Homo sapiens (Human) protein is Major prion protein (PRNP).